Consider the following 625-residue polypeptide: Threonine--tRNA ligase (625 aa).

An editing domain region spans residues 1-147 (MRILLIHSDY…TIVPGEAKKE (147 aa)). The segment at 206 to 505 (PHVKIMLEQE…MKKGKKPMYP (300 aa)) is catalytic. C298, H350, and H474 together coordinate Zn(2+).

It belongs to the class-II aminoacyl-tRNA synthetase family. As to quaternary structure, homodimer. Requires Zn(2+) as cofactor.

The protein resides in the cytoplasm. It catalyses the reaction tRNA(Thr) + L-threonine + ATP = L-threonyl-tRNA(Thr) + AMP + diphosphate + H(+). In terms of biological role, catalyzes the attachment of threonine to tRNA(Thr) in a two-step reaction: L-threonine is first activated by ATP to form Thr-AMP and then transferred to the acceptor end of tRNA(Thr). Also edits incorrectly charged L-seryl-tRNA(Thr). This Thermococcus sibiricus (strain DSM 12597 / MM 739) protein is Threonine--tRNA ligase.